The primary structure comprises 202 residues: Recombination protein RecR (202 aa).

A C4-type zinc finger spans residues 58-73; it reads CANCGNLTDKKLCDIC. The region spanning 81–178 is the Toprim domain; sequence SVITVVEDSM…KVSRIAMGVP (98 aa).

This sequence belongs to the RecR family.

Functionally, may play a role in DNA repair. It seems to be involved in an RecBC-independent recombinational process of DNA repair. It may act with RecF and RecO. This chain is Recombination protein RecR, found in Finegoldia magna (strain ATCC 29328 / DSM 20472 / WAL 2508) (Peptostreptococcus magnus).